Consider the following 105-residue polypeptide: Large ribosomal subunit protein uL24 (105 aa).

Belongs to the universal ribosomal protein uL24 family. Part of the 50S ribosomal subunit.

Its function is as follows. One of two assembly initiator proteins, it binds directly to the 5'-end of the 23S rRNA, where it nucleates assembly of the 50S subunit. One of the proteins that surrounds the polypeptide exit tunnel on the outside of the subunit. This is Large ribosomal subunit protein uL24 from Mycobacterium leprae (strain Br4923).